An 81-amino-acid chain; its full sequence is Dermaseptin-S6 (81 aa).

The N-terminal stretch at 1-22 (MDILKKSLFFILFLGLVSLSIS) is a signal peptide. Residues 22 to 49 (SEEEKRENEDEEDQEDDEQSEEKRGLWS) are disordered. The propeptide occupies 23–45 (EEEKRENEDEEDQEDDEQSEEKR). Residues 30 to 41 (EDEEDQEDDEQS) are compositionally biased toward acidic residues. An Isoleucine amide modification is found at I78. A propeptide spanning residues 80–81 (EQ) is cleaved from the precursor.

Belongs to the frog skin active peptide (FSAP) family. Dermaseptin subfamily. Expressed by the skin glands.

It is found in the secreted. Functionally, antimicrobial peptide. The protein is Dermaseptin-S6 of Phyllomedusa sauvagei (Sauvage's leaf frog).